A 131-amino-acid chain; its full sequence is D-ribose pyranase (131 aa).

Residue His-20 is the Proton donor of the active site. Substrate is bound by residues Asp-28, His-98, and 120–122 (FSN).

The protein belongs to the RbsD / FucU family. RbsD subfamily. In terms of assembly, homodecamer.

It localises to the cytoplasm. It carries out the reaction beta-D-ribopyranose = beta-D-ribofuranose. The protein operates within carbohydrate metabolism; D-ribose degradation; D-ribose 5-phosphate from beta-D-ribopyranose: step 1/2. Functionally, catalyzes the interconversion of beta-pyran and beta-furan forms of D-ribose. The chain is D-ribose pyranase from Levilactobacillus brevis (strain ATCC 367 / BCRC 12310 / CIP 105137 / JCM 1170 / LMG 11437 / NCIMB 947 / NCTC 947) (Lactobacillus brevis).